Reading from the N-terminus, the 596-residue chain is Probable ABC transporter ECU01_0200/ECU01_1410 (596 aa).

The next 3 membrane-spanning stretches (helical) occupy residues 26–46 (ALMA…VMSI), 173–193 (LVPI…MLRI), and 289–309 (LSVL…LGGI). One can recognise an ABC transmembrane type-1 domain in the interval 39-318 (KWFDVMSIKR…IARDLGFWLT (280 aa)). The ABC transporter domain occupies 361–593 (VEFDDVSFAY…RGMYWRMKTA (233 aa)). Residues Tyr-370 and 400 to 411 (GRPGSGKSTILR) contribute to the ATP site.

Belongs to the ABC transporter superfamily. ABCB family. Heavy Metal importer (TC 3.A.1.210) subfamily.

The protein localises to the membrane. In Encephalitozoon cuniculi (strain GB-M1) (Microsporidian parasite), this protein is Probable ABC transporter ECU01_0200/ECU01_1410.